A 142-amino-acid chain; its full sequence is MPTPSMEDYIEQIYLLIDEKGYARVSDIAEALSVHPSSVTKMVQKLDKDEYLIYEKYRGLVLTAKGKKIGERLVYRHELLEQFMRIIGVDESKIYNDVEGIEHHLSWEAIDRIGDLVQYFEEDDFRIETLRAVQKANGEQSK.

The HTH dtxR-type domain maps to 1-63 (MPTPSMEDYI…YEKYRGLVLT (63 aa)). Aspartate 8, glutamate 11, histidine 77, glutamate 99, glutamate 102, and histidine 103 together coordinate Mn(2+).

It belongs to the DtxR/MntR family. In terms of assembly, homodimer.

The protein localises to the cytoplasm. Its activity is regulated as follows. DNA binding is strongly activated by Mn(2+). Central regulator of manganese homeostasis. This Bacillus cytotoxicus (strain DSM 22905 / CIP 110041 / 391-98 / NVH 391-98) protein is HTH-type transcriptional regulator MntR.